Consider the following 1070-residue polypeptide: Phosphatidylinositol 4,5-bisphosphate 3-kinase catalytic subunit beta isoform (1070 aa).

Residues 26 to 115 (SDGSIPVDFL…LPVLKLVTRS (90 aa)) enclose the PI3K-ABD domain. Residues 194-285 (GGKLIVAVHF…RALPHFILVE (92 aa)) form the PI3K-RBD domain. Serine 324 bears the Phosphoserine mark. Residues 327 to 496 (WENNNPFQIV…NATALHVKFP (170 aa)) enclose the C2 PI3K-type domain. Residues 410–418 (KVKTKKSTK) carry the Nuclear localization signal motif. The region spanning 524–701 (ANVSSRGGKK…GVILEAYCRG (178 aa)) is the PIK helical domain. Residues 772-1053 (YVEKCKYMDS…KFDEALRESW (282 aa)) enclose the PI3K/PI4K catalytic domain. The segment at 778-784 (YMDSKMK) is G-loop. A catalytic loop region spans residues 916 to 924 (GIGDRHSDN). The interval 935 to 961 (HIDFGHILGNFKSKFGIKRERVPFILT) is activation loop. Serine 1070 bears the Phosphoserine; by autocatalysis mark.

This sequence belongs to the PI3/PI4-kinase family. In terms of assembly, heterodimer of a catalytic subunit PIK3CB and a p85 regulatory subunit (PIK3R1, PIK3R2 or PIK3R3). Interaction with PIK3R2 is required for nuclear localization and nuclear export. Part of a complex with PIK3R1 and PTEN. Binding to PTEN may antagonize the lipid kinase activity under normal growth conditions. Part of a complex involved in autophagosome formation composed of PIK3C3 and PIK3R4. Interacts with BECN1, ATG14 and RAB5A. Post-translationally, autophosphorylation at Ser-1070 negatively regulates the phosphatidylinositol-4,5-bisphosphate 3-kinase activity. In terms of tissue distribution, expressed ubiquitously.

The protein localises to the cytoplasm. Its subcellular location is the nucleus. It catalyses the reaction a 1,2-diacyl-sn-glycero-3-phospho-(1D-myo-inositol-4,5-bisphosphate) + ATP = a 1,2-diacyl-sn-glycero-3-phospho-(1D-myo-inositol-3,4,5-trisphosphate) + ADP + H(+). The enzyme catalyses 1-octadecanoyl-2-(5Z,8Z,11Z,14Z)-eicosatetraenoyl-sn-glycero-3-phospho-1D-myo-inositol 4,5-bisphosphate + ATP = 1-octadecanoyl-2-(5Z,8Z,11Z,14Z-eicosatetraenoyl)-sn-glycero-3-phospho-(1D-myo-inositol 3,4,5-triphosphate) + ADP + H(+). It carries out the reaction L-seryl-[protein] + ATP = O-phospho-L-seryl-[protein] + ADP + H(+). It participates in phospholipid metabolism; phosphatidylinositol phosphate biosynthesis. Phosphoinositide-3-kinase (PI3K) phosphorylates phosphatidylinositol derivatives at position 3 of the inositol ring to produce 3-phosphoinositides. Uses ATP and PtdIns(4,5)P2 (phosphatidylinositol 4,5-bisphosphate) to generate phosphatidylinositol 3,4,5-trisphosphate (PIP3). PIP3 plays a key role by recruiting PH domain-containing proteins to the membrane, including AKT1 and PDPK1, activating signaling cascades involved in cell growth, survival, proliferation, motility and morphology. Involved in the activation of AKT1 upon stimulation by G-protein coupled receptors (GPCRs) ligands such as CXCL12, sphingosine 1-phosphate, and lysophosphatidic acid. May also act downstream receptor tyrosine kinases. Required in different signaling pathways for stable platelet adhesion and aggregation. Plays a role in platelet activation signaling triggered by GPCRs, alpha-IIb/beta-3 integrins (ITGA2B/ ITGB3) and ITAM (immunoreceptor tyrosine-based activation motif)-bearing receptors such as GP6. Regulates the strength of adhesion of ITGA2B/ ITGB3 activated receptors necessary for the cellular transmission of contractile forces. Required for platelet aggregation induced by F2 (thrombin) and thromboxane A2 (TXA2). Has a role in cell survival. May have a role in cell migration. Involved in the early stage of autophagosome formation. Modulates the intracellular level of PtdIns3P (phosphatidylinositol 3-phosphate) and activates PIK3C3 kinase activity. May act as a scaffold, independently of its lipid kinase activity to positively regulate autophagy. May have a role in insulin signaling as scaffolding protein in which the lipid kinase activity is not required. May have a kinase-independent function in regulating cell proliferation and in clathrin-mediated endocytosis. Mediator of oncogenic signal in cell lines lacking PTEN. The lipid kinase activity is necessary for its role in oncogenic transformation. Required for the growth of ERBB2 and RAS driven tumors. Also has a protein kinase activity showing autophosphorylation. This chain is Phosphatidylinositol 4,5-bisphosphate 3-kinase catalytic subunit beta isoform (PIK3CB), found in Homo sapiens (Human).